We begin with the raw amino-acid sequence, 509 residues long: MVGSYVLWLALASCILTLASPEQQGNRNLINTRSYDPCQNYTLLDEPSRSTENTEGSQVCDKDKHGWYRFVGDGGVRMPETCVPMYRCQTDAPLWLNGTHPTLAEGIVNRTACAHWSGNCCLWKTVVQVKACPGEFHVYRLEGTPKCSLRYCTDASTATDKCKNLCRPEEACSFLNGTWDCFCRSDLNSSDVHSLQPRLNCGAKEIQVSLDKCQLGGLGFGDEVIAYLRDWNCSNMMQREERNWISVTSPTQARACGNILERNGTHAIYKNTLSLANEFIIRDTILNINFQCAYPLDMKVSLQTALHPIVSSLNISVDGEGEFTVRMALFQDQSYISPYEGAAAVLAVESMLYVGAILEKGDTSRFNLLLRNCYATPTKDKTDPVKYFIIRNSCPNQYDSTIHVEENGVSSESRFSVQMFMFAGNYDLVFLHCEIHLCDSLNEQCQPCCSRSQQRSEIVALNPARVLDLGPITRRSSASVDITDGTPSTAGFLLAWPMLLLPILLAELF.

The first 21 residues, methionine 1 to proline 21, serve as a signal peptide directing secretion. The tract at residues aspartate 36–glycine 56 is D10C. Disulfide bonds link cysteine 38–cysteine 132, cysteine 60–cysteine 147, cysteine 82–cysteine 120, cysteine 88–cysteine 152, cysteine 113–cysteine 121, cysteine 162–cysteine 172, cysteine 166–cysteine 181, cysteine 183–cysteine 213, cysteine 201–cysteine 292, and cysteine 233–cysteine 256. N-linked (GlcNAc...) asparagine glycosylation is found at asparagine 40, asparagine 97, and asparagine 109. One can recognise an EGF-like domain in the interval alanine 158 to glycine 202. N-linked (GlcNAc...) asparagine glycosylation is found at asparagine 176, asparagine 188, and asparagine 232. Residues asparagine 200–alanine 293 are ZP-N. The ZP domain maps to asparagine 200–serine 456. N-linked (GlcNAc...) asparagine glycosylation is found at asparagine 263 and asparagine 314. The flexible ZP-N/ZP-C linker stretch occupies residues tyrosine 294 to valine 317. An internal hydrophobic patch (IHP) region spans residues aspartate 318–leucine 329. The ZP-C stretch occupies residues aspartate 318 to serine 456. Intrachain disulfides connect cysteine 373–cysteine 433, cysteine 394–cysteine 449, and cysteine 438–cysteine 445. The interval proline 463–proline 471 is external hydrophobic patch (EHP). The GPI-anchor amidated aspartate moiety is linked to residue aspartate 484. Residues glycine 485–phenylalanine 509 constitute a propeptide, removed in mature form.

As to quaternary structure, interacts with SYCN. Interacts with bacterial adhesin fimH. In terms of processing, N-glycosylated. Expressed in pancreas.

Its subcellular location is the zymogen granule membrane. It localises to the secreted. The protein localises to the cell membrane. The protein resides in the apical cell membrane. It is found in the membrane raft. Its subcellular location is the endosome. In terms of biological role, functions as an intestinal M-cell transcytotic receptor specific of type-I-piliated bacteria that participates in the mucosal immune response toward these bacteria. At the apical membrane of M-cells it binds fimH, a protein of the bacteria type I pilus tip. Internalizes bound bacteria, like E.coli and S.typhimurium, from the lumen of the intestine and delivers them, through M-cells, to the underlying organized lymphoid follicles where they are captured by antigen-presenting dendritic cells to elicit a mucosal immune response. The polypeptide is Pancreatic secretory granule membrane major glycoprotein GP2 (Canis lupus familiaris (Dog)).